Reading from the N-terminus, the 291-residue chain is Pyridoxal 5'-phosphate synthase subunit PdxS (291 aa).

Asp-23 contributes to the D-ribose 5-phosphate binding site. The active-site Schiff-base intermediate with D-ribose 5-phosphate is Lys-80. Gly-152 provides a ligand contact to D-ribose 5-phosphate. Position 164 (Arg-164) interacts with D-glyceraldehyde 3-phosphate. D-ribose 5-phosphate contacts are provided by residues Gly-213 and 234-235 (GS).

This sequence belongs to the PdxS/SNZ family. In the presence of PdxT, forms a dodecamer of heterodimers.

It carries out the reaction aldehydo-D-ribose 5-phosphate + D-glyceraldehyde 3-phosphate + L-glutamine = pyridoxal 5'-phosphate + L-glutamate + phosphate + 3 H2O + H(+). The protein operates within cofactor biosynthesis; pyridoxal 5'-phosphate biosynthesis. Functionally, catalyzes the formation of pyridoxal 5'-phosphate from ribose 5-phosphate (RBP), glyceraldehyde 3-phosphate (G3P) and ammonia. The ammonia is provided by the PdxT subunit. Can also use ribulose 5-phosphate and dihydroxyacetone phosphate as substrates, resulting from enzyme-catalyzed isomerization of RBP and G3P, respectively. The polypeptide is Pyridoxal 5'-phosphate synthase subunit PdxS (Methanocorpusculum labreanum (strain ATCC 43576 / DSM 4855 / Z)).